We begin with the raw amino-acid sequence, 217 residues long: Adenylate kinase (217 aa).

10-15 (GAGKGT) contacts ATP. Residues 30 to 59 (STGDMLRAAVKAESELGLQVKEVMASGGLV) form an NMP region. AMP is bound by residues T31, R36, 57-59 (GLV), 85-88 (GFPR), and Q92. Residues 122 to 159 (GRRVHEGSGRIYHVKYDPPKVEGKDDETGEALIQREDD) are LID. Residues R123 and 132–133 (IY) contribute to the ATP site. AMP-binding residues include R156 and R167. G203 provides a ligand contact to ATP.

This sequence belongs to the adenylate kinase family. Monomer.

It is found in the cytoplasm. The enzyme catalyses AMP + ATP = 2 ADP. Its pathway is purine metabolism; AMP biosynthesis via salvage pathway; AMP from ADP: step 1/1. Its function is as follows. Catalyzes the reversible transfer of the terminal phosphate group between ATP and AMP. Plays an important role in cellular energy homeostasis and in adenine nucleotide metabolism. The protein is Adenylate kinase of Marinobacter nauticus (strain ATCC 700491 / DSM 11845 / VT8) (Marinobacter aquaeolei).